The following is a 370-amino-acid chain: DNA primase large subunit PriL (370 aa).

The [4Fe-4S] cluster site is built by C268, C341, C350, and C354.

The protein belongs to the eukaryotic-type primase large subunit family. Heterodimer of a small subunit (PriS) and a large subunit (PriL). [4Fe-4S] cluster is required as a cofactor.

Its function is as follows. Regulatory subunit of DNA primase, an RNA polymerase that catalyzes the synthesis of short RNA molecules used as primers for DNA polymerase during DNA replication. Stabilizes and modulates the activity of the small subunit, increasing the rate of DNA synthesis, and conferring RNA synthesis capability. The DNA polymerase activity may enable DNA primase to also catalyze primer extension after primer synthesis. May also play a role in DNA repair. This Archaeoglobus fulgidus (strain ATCC 49558 / DSM 4304 / JCM 9628 / NBRC 100126 / VC-16) protein is DNA primase large subunit PriL.